Here is a 552-residue protein sequence, read N- to C-terminus: Urocanate hydratase (552 aa).

NAD(+)-binding positions include 49 to 50 (GG), Gln-127, 173 to 175 (GMG), Glu-193, Arg-198, 239 to 240 (NA), 260 to 264 (QTSAH), 270 to 271 (YI), and Tyr-319. Cys-407 is a catalytic residue. Position 489 (Gly-489) interacts with NAD(+).

This sequence belongs to the urocanase family. NAD(+) is required as a cofactor.

The protein resides in the cytoplasm. It catalyses the reaction 4-imidazolone-5-propanoate = trans-urocanate + H2O. It functions in the pathway amino-acid degradation; L-histidine degradation into L-glutamate; N-formimidoyl-L-glutamate from L-histidine: step 2/3. Its function is as follows. Catalyzes the conversion of urocanate to 4-imidazolone-5-propionate. The sequence is that of Urocanate hydratase from Geobacillus sp. (strain WCH70).